The following is a 191-amino-acid chain: dTTP/UTP pyrophosphatase (191 aa).

Catalysis depends on D65, which acts as the Proton acceptor.

This sequence belongs to the Maf family. YhdE subfamily. A divalent metal cation is required as a cofactor.

The protein resides in the cytoplasm. It catalyses the reaction dTTP + H2O = dTMP + diphosphate + H(+). The enzyme catalyses UTP + H2O = UMP + diphosphate + H(+). In terms of biological role, nucleoside triphosphate pyrophosphatase that hydrolyzes dTTP and UTP. May have a dual role in cell division arrest and in preventing the incorporation of modified nucleotides into cellular nucleic acids. In Leptospira biflexa serovar Patoc (strain Patoc 1 / Ames), this protein is dTTP/UTP pyrophosphatase.